The chain runs to 211 residues: GTP pyrophosphokinase YjbM (211 aa).

Guanosine 3'-diphosphate 5'-triphosphate-binding positions include 21–28, 41–42, and 46–48; these read KVKLKGIR, EF, and RVK. Residues 46-48, Ser52, 56-59, Asp72, and Arg77 contribute to the ATP site; these read RVK and KARR. Residue Arg59 coordinates guanosine 3'-diphosphate 5'-triphosphate. Asp72 lines the Mg(2+) pocket. Residues Arg105, 112–114, and His120 contribute to the guanosine 3'-diphosphate 5'-triphosphate site; that span reads KES. Catalysis depends on Glu139, which acts as the Proton acceptor. Guanosine 3'-diphosphate 5'-triphosphate contacts are provided by residues Asn148 and 151–155; that span reads ATIEH.

The protein belongs to the RelA/SpoT family. Homotetramer.

It catalyses the reaction GTP + ATP = guanosine 3'-diphosphate 5'-triphosphate + AMP. The catalysed reaction is GDP + ATP = guanosine 3',5'-bis(diphosphate) + AMP. It functions in the pathway purine metabolism; ppGpp biosynthesis; ppGpp from GTP: step 1/2. Its activity is regulated as follows. Allosterically regulated by its own products; pppGpp simulates synthesis 10-fold more than ppGpp. 2 pppGpp molecules bind in a regulatory cleft in the middle of the tetramer in an asymmetric manner. There is a specific contact of Lys-25 to the gamma-phosphate of pppGpp, explaining why pppGpp stimulates activity but ppGpp does not. In terms of biological role, functions as a (p)ppGpp synthase; GDP can be used instead of GTP, resulting in an increase of (p)ppGpp synthesis. The enzyme binds ATP, then GDP or GTP and catalysis is highly cooperative. In eubacteria ppGpp (guanosine 3'-diphosphate 5'-diphosphate) is a mediator of the stringent response that coordinates a variety of cellular activities in response to changes in nutritional abundance. Probably has a minor role in the stringent response. The protein is GTP pyrophosphokinase YjbM (yjbM) of Bacillus subtilis (strain 168).